The following is a 740-amino-acid chain: ATP-dependent RNA helicase DDX1 (740 aa).

The interval 1 to 295 (MAAFSEMGVM…APKALIVEPS (295 aa)) is necessary for interaction with HNRNPK. The interaction with dsRNA stretch occupies residues 1–448 (MAAFSEMGVM…DTVHHVVVPV (448 aa)). Positions 1 to 525 (MAAFSEMGVM…KIDCDNLEQY (525 aa)) are necessary for interaction with RELA. A Helicase ATP-binding domain is found at 2–428 (AAFSEMGVMP…SEKIMHFPTW (427 aa)). 46 to 53 (AETGSGKT) is an ATP binding site. A B30.2/SPRY domain is found at 70–247 (DQQEGKKGKT…LKFNFGEEEF (178 aa)). N6-acetyllysine occurs at positions 239 and 268. At Lys-281 the chain carries N6-acetyllysine; alternate. Residue Lys-281 forms a Glycyl lysine isopeptide (Lys-Gly) (interchain with G-Cter in SUMO2); alternate linkage. The DEAD box motif lies at 370 to 373 (DEAD). Residue Ser-481 is modified to Phosphoserine. In terms of domain architecture, Helicase C-terminal spans 493–681 (KGEYAVRAIK…QVEPDIKVPV (189 aa)). Positions 525–740 (YFMQQGGGPD…YLPNQLFRTF (216 aa)) are necessary for interaction with HNRNPK.

It belongs to the DEAD box helicase family. DDX1 subfamily. In terms of assembly, found in a multi-helicase-TICAM1 complex at least composed of DHX36, DDX1, DDX21 and TICAM1; this complex exists in resting cells with or without poly(I:C) RNA ligand stimulation. Interacts with DHX36. Interacts (via B30.2/SPRY domain) with DDX21 (via N-terminus); this interaction serves as bridges to TICAM1. Interacts with FAM98A (via N- and C-terminus). Interacts with MBNL1. Interacts with CSTF2. Interacts with HNRNPK. Interacts with ATM. Interacts with RELA (via C-terminus). Component of the tRNA-splicing ligase complex. Interacts with PHF5A (via C-terminus). Interacts with PQBP1. Interacts with ERCC6. Post-translationally, phosphorylated by ATM kinase; phosphorylation is increased in response to ionizing radiation (IR). Testis-specific. Expressed in the germ line stem cells, spermatogonia and spermatocytes of the testis. Also expressed in the seminoma and nonseminoma types of testicular germ cell tumors (TGCTs) (at protein level).

Its subcellular location is the nucleus. It is found in the cytoplasm. The protein resides in the cytosol. It localises to the cytoplasmic granule. The protein localises to the mitochondrion. It catalyses the reaction ATP + H2O = ADP + phosphate + H(+). In terms of biological role, acts as an ATP-dependent RNA helicase, able to unwind both RNA-RNA and RNA-DNA duplexes. Possesses 5' single-stranded RNA overhang nuclease activity. Possesses ATPase activity on various RNA, but not DNA polynucleotides. May play a role in RNA clearance at DNA double-strand breaks (DSBs), thereby facilitating the template-guided repair of transcriptionally active regions of the genome. Together with RELA, acts as a coactivator to enhance NF-kappa-B-mediated transcriptional activation. Acts as a positive transcriptional regulator of cyclin CCND2 expression. Binds to the cyclin CCND2 promoter region. Associates with chromatin at the NF-kappa-B promoter region via association with RELA. Binds to poly(A) RNA. May be involved in 3'-end cleavage and polyadenylation of pre-mRNAs. Component of the tRNA-splicing ligase complex required to facilitate the enzymatic turnover of catalytic subunit RTCB: together with archease (ZBTB8OS), acts by facilitating the guanylylation of RTCB, a key intermediate step in tRNA ligation. Component of a multi-helicase-TICAM1 complex that acts as a cytoplasmic sensor of viral double-stranded RNA (dsRNA) and plays a role in the activation of a cascade of antiviral responses including the induction of pro-inflammatory cytokines via the adapter molecule TICAM1. Specifically binds (via helicase ATP-binding domain) on both short and long poly(I:C) dsRNA. This is ATP-dependent RNA helicase DDX1 (Ddx1) from Mus musculus (Mouse).